The chain runs to 101 residues: Protein S100-A7A (101 aa).

EF-hand domains follow at residues 13 to 48 (MIDMFHKYTGRDGKIEKPSLLTMMKENFPNFLSACD) and 50 to 85 (KGIHYLATVFEKKDKNEDKKIDFSEFLSLLGDIAAD). Zn(2+)-binding residues include histidine 18, glutamate 28, and glutamate 38. Residues aspartate 63 and asparagine 65 each contribute to the Ca(2+) site. Glutamate 66 contributes to the Zn(2+) binding site. Ca(2+) is bound by residues aspartate 67, lysine 69, and glutamate 74. Positions 87 and 91 each coordinate Zn(2+).

This sequence belongs to the S-100 family. In terms of tissue distribution, overexpressed in psoriasis.

It is found in the cytoplasm. Its function is as follows. May be involved in epidermal differentiation and inflammation and might therefore be important for the pathogenesis of psoriasis and other diseases. The sequence is that of Protein S100-A7A (S100A7A) from Homo sapiens (Human).